Consider the following 297-residue polypeptide: Homeobox protein HMX3 (297 aa).

2 disordered regions span residues 24-43 and 96-172; these read NSDS…KAGL and AAQK…RKKK. Basic and acidic residues-rich tracts occupy residues 109–123 and 145–166; these read TDRD…SDPD and EDGK…ADKK. The homeobox DNA-binding region spans 170 to 229; it reads KKKTRTVFSRSQVFQLESTFDMKRYLSSSERAGLAASLHLTETQVKIWFQNRRNKWKRQL.

It belongs to the HMX homeobox family. In terms of tissue distribution, expressed in the ear placode and vesicle and in cells forming the vestibulo-acoustic ganglion. Also expressed in the lateral line.

Its subcellular location is the nucleus. In terms of biological role, transcription factor involved in specification of neuronal cell types and which is required for inner ear and hypothalamus development. Binds to the 5'-CAAGTG-3' core sequence. This chain is Homeobox protein HMX3 (hmx3), found in Danio rerio (Zebrafish).